The chain runs to 167 residues: Phospholipase A2 inhibitor alpha-like protein (167 aa).

An N-terminal signal peptide occupies residues 1–19 (MQLILLSSLLLLGLSLANG). A C-type lectin domain is found at 62–163 (GSERLYVTNK…CDEDLLVVCE (102 aa)). 2 cysteine pairs are disulfide-bonded: Cys83/Cys162 and Cys140/Cys154.

Belongs to the alpha-type phospholipase A2 inhibitor family. Homotrimer.

The protein localises to the secreted. Its function is as follows. Has no PLA2 inhibitory activity. This chain is Phospholipase A2 inhibitor alpha-like protein, found in Elaphe climacophora (Japanese rat snake).